The following is a 179-amino-acid chain: Large ribosomal subunit protein uL5 (179 aa).

Belongs to the universal ribosomal protein uL5 family. Part of the 50S ribosomal subunit; part of the 5S rRNA/L5/L18/L25 subcomplex. Contacts the 5S rRNA and the P site tRNA. Forms a bridge to the 30S subunit in the 70S ribosome.

Functionally, this is one of the proteins that bind and probably mediate the attachment of the 5S RNA into the large ribosomal subunit, where it forms part of the central protuberance. In the 70S ribosome it contacts protein S13 of the 30S subunit (bridge B1b), connecting the 2 subunits; this bridge is implicated in subunit movement. Contacts the P site tRNA; the 5S rRNA and some of its associated proteins might help stabilize positioning of ribosome-bound tRNAs. The polypeptide is Large ribosomal subunit protein uL5 (Alkaliphilus oremlandii (strain OhILAs) (Clostridium oremlandii (strain OhILAs))).